We begin with the raw amino-acid sequence, 157 residues long: SUMO-conjugating enzyme UBC9-B (157 aa).

The UBC core domain maps to I4–P157. An interaction with SUMO1 region spans residues R13–K18. Catalysis depends on C93, which acts as the Glycyl thioester intermediate.

It belongs to the ubiquitin-conjugating enzyme family. Forms a tight complex with rangap1 and ranbp2. Interacts with vsx1.

The protein resides in the nucleus. It functions in the pathway protein modification; protein sumoylation. In terms of biological role, accepts the ubiquitin-like proteins sumo1, sumo2 and sumo3 from the uble1a-uble1b E1 complex and catalyzes their covalent attachment to other proteins with the help of an E3 ligase such as ranbp2 or cbx4. Essential for nuclear architecture and chromosome segregation. Mediates nuclear localization of vsx1. Required for progression through mitosis during organogenesis. This chain is SUMO-conjugating enzyme UBC9-B (ube2ib), found in Danio rerio (Zebrafish).